The chain runs to 950 residues: Sodium/calcium exchanger Calx (950 aa).

An N-terminal signal peptide occupies residues 1-22 (MQLLLKSIFTCALFVIFVYATA). Topologically, residues 23–120 (QSLLKVQETE…PQRNISVGDR (98 aa)) are extracellular. 3 N-linked (GlcNAc...) asparagine glycosylation sites follow: Asn-39, Asn-47, and Asn-114. Residues 121–141 (LVRGFVYFVLLIYLFVGVSII) form a helical membrane-spanning segment. The Cytoplasmic portion of the chain corresponds to 142–179 (ADRFMAAIEAITSIERAVVVKGPNNTKQVMHVRIWNET). Residues 180–200 (VANLTLMALGSSAPEILLSVI) form a helical membrane-spanning segment. The Extracellular segment spans residues 201-216 (EIYAKDFESGDLGPGT). A helical membrane pass occupies residues 217–237 (IVGSAAYNLFMIIAVCMIWIP). At 238–257 (AGEVRRIRHLRVFFVTALFS) the chain is on the cytoplasmic side. Helical transmembrane passes span 258-278 (VFAY…VILV) and 279-299 (WEAI…YIAE). Over 300-749 (RRLLVYKYMD…NDDEEEEVPS (450 aa)) the chain is Cytoplasmic. A corresponds to the exchanger inhibitory peptide (XIP) found in other sodium/calcium exchange proteins and thought to be involved in calmodulin binding region spans residues 301–318 (RLLVYKYMDKNYRVNKRG). The region spanning 440-551 (DPIRMYFEPG…MIATVMILDD (112 aa)) is the Calx-beta 1 domain. Ca(2+) is bound by residues Glu-455, Asp-490, Asp-515, Asp-516, Val-518, Glu-520, Glu-523, Asp-550, Asp-551, and Asp-552. Residues 555–694 (GIFAFTDSVF…LTTAYVRIRE (140 aa)) enclose the Calx-beta 2 domain. A helical membrane pass occupies residues 750–770 (CFSYVSHFVCLFWKVLFAFVP). Topologically, residues 771–775 (PTDIC) are extracellular. Residues 776 to 796 (GGYVTFVVSIFVIGVITAIIG) traverse the membrane as a helical segment. Over 797 to 813 (DAASYFGCALNIKDSVT) the chain is Cytoplasmic. The chain crosses the membrane as a helical span at residues 814-834 (AILFVALGTSIPDTFASMIAA). At 835–848 (KHDEGADNCIGNVT) the chain is on the extracellular side. Asn-846 is a glycosylation site (N-linked (GlcNAc...) asparagine). The chain crosses the membrane as a helical span at residues 849 to 869 (GSNAVNVFLGIGLAWTIAAVY). Residues 870–883 (HSSHGMTFNVEPGT) lie on the Cytoplasmic side of the membrane. The chain crosses the membrane as a helical span at residues 884-904 (IGFAVALFCGEALIAIMLIMF). The Extracellular portion of the chain corresponds to 905–923 (RRWHKGIGAELGGPKVSKY). The helical transmembrane segment at 924–944 (ISAAILVFLWVFYVVICILEA) threads the bilayer. Over 945-950 (YDVIRV) the chain is Cytoplasmic.

This sequence belongs to the Ca(2+):cation antiporter (CaCA) (TC 2.A.19) family. SLC8 subfamily. Ubiquitously expressed with higher expression in head compared to body (at protein level). Enriched in photoreceptor cells of the eye (at protein level). In the adult head, expressed in retina, optic ganglia and all neuronal tissues.

The protein localises to the cell membrane. It localises to the cell projection. Its subcellular location is the rhabdomere membrane. The catalysed reaction is Ca(2+)(in) + 3 Na(+)(out) = Ca(2+)(out) + 3 Na(+)(in). With respect to regulation, activated by a Na(+) electrochemical gradient but also undergoes Na(2+)-dependent inactivation. Inhibited by micromolar levels of cytoplasmic Ca(2+), which is the opposite of most characterized mammalian homologs. Exhibits greater extent of inhibition by Ca(2+) than isoform D/1.2. Its activity is regulated as follows. Exhibits greater Na(2+)-dependent inactivation than isoform A/1.1, probably due to greater stability of the inactive Na(2+)-bound form. Its function is as follows. Na(+)/Ca(2+) antiporter that couples the energy of a Na(+) electrochemical gradient to the movement of Ca(2+) against an electrochemical gradient across a membrane, which contributes to the regulation of cytoplasmic Ca(2+) levels. Mediates Na(+)/Ca(2+) exchange in photoreceptor cells and involved in controlling Ca(2+) levels during phototransduction, affecting magnitude of the photoresponse, activation kinetics, signal amplification, response termination, and light adaptation. Light induced depolarization of photoreceptor cells, resulting in Na(+) and Ca(2+) entry through trp/transient receptor potential protein channels, is essential for photoreceptor cell function but may result in toxic levels of cytoplasmic Ca(2+). Na(+)/Ca(2+) antiporter regulation of Ca(2+) levels protects photoreceptor cells from light-dependent retinal degeneration. The polypeptide is Sodium/calcium exchanger Calx (Drosophila melanogaster (Fruit fly)).